The chain runs to 369 residues: Phosphoribosyl pyrophosphate synthase-associated protein 2 (369 aa).

Met1 is modified (N-acetylmethionine). Thr5 is modified (phosphothreonine). Phosphoserine is present on residues Ser219, Ser227, and Ser233.

It belongs to the ribose-phosphate pyrophosphokinase family. In terms of assembly, binds to PRPS1 and PRPS2.

In terms of biological role, seems to play a negative regulatory role in 5-phosphoribose 1-diphosphate synthesis. The sequence is that of Phosphoribosyl pyrophosphate synthase-associated protein 2 (PRPSAP2) from Pongo abelii (Sumatran orangutan).